The following is a 91-amino-acid chain: Large ribosomal subunit protein uL23c (91 aa).

It belongs to the universal ribosomal protein uL23 family. As to quaternary structure, part of the 50S ribosomal subunit.

The protein resides in the plastid. It localises to the chloroplast. Binds to 23S rRNA. This chain is Large ribosomal subunit protein uL23c (rpl23), found in Pinus thunbergii (Japanese black pine).